The primary structure comprises 516 residues: RNA-binding region-containing protein 3 (516 aa).

4 disordered regions span residues 1 to 27 (MAAP…RGDR), 106 to 130 (VHSP…DDKE), 210 to 254 (EDYM…DEDR), and 264 to 283 (ANLQ…RKKR). Serine 21 carries the post-translational modification Phosphoserine. An RRM 1 domain is found at 27 to 102 (RTLLVRHLPA…HTLVVEFAKE (76 aa)). Position 108 is a phosphoserine (serine 108). Positions 115–130 (TEKKKRSDDPVEDDKE) are enriched in basic and acidic residues. A compositionally biased stretch (pro residues) spans 217–230 (APLPPTSPQPPEEP). Residues 269–283 (KRPKPIKQRHVRKKR) show a composition bias toward basic residues. The 84-residue stretch at 419–502 (CRIYVKNLAK…KPMVVQFARS (84 aa)) folds into the RRM 2 domain.

Component of the U11/U12 snRNPs that are part of the U12-type spliceosome. Found in a complex with m(7)G-capped U12 snRNA. Interacts with PDCD7.

The protein resides in the nucleus. Participates in pre-mRNA U12-dependent splicing, performed by the minor spliceosome which removes U12-type introns. U12-type introns comprises less than 1% of all non-coding sequences. Binds to the 3'-stem-loop of m(7)G-capped U12 snRNA. This chain is RNA-binding region-containing protein 3 (RNPC3), found in Bos taurus (Bovine).